Here is a 270-residue protein sequence, read N- to C-terminus: Small ribosomal subunit protein uS2 (270 aa).

It belongs to the universal ribosomal protein uS2 family. Component of the small ribosomal subunit. Mature ribosomes consist of a small (40S) and a large (60S) subunit. The 40S subunit contains about 33 different proteins and 1 molecule of RNA (18S). The 60S subunit contains about 49 different proteins and 3 molecules of RNA (28S, 5.8S and 5S). Interacts with oho23B/rpS21.

It localises to the cytoplasm. The protein localises to the nucleus. Its function is as follows. Required for the assembly and/or stability of the 40S ribosomal subunit. Required for the processing of the 20S rRNA-precursor to mature 18S rRNA in a late step of the maturation of 40S ribosomal subunits. Required during oogenesis and imaginal development. The chain is Small ribosomal subunit protein uS2 from Drosophila persimilis (Fruit fly).